Reading from the N-terminus, the 128-residue chain is MGKQATPRALPENEAKAVARMLRVSPQKLNLVAQMIRGKKVDTALAELQFSRKRISTEVKKCLESAIANAENNHDLDVDDLVVSQAFVGKALVLKRFHARARGRGARILKPFSNLTIVVREVRQAEAA.

It belongs to the universal ribosomal protein uL22 family. Part of the 50S ribosomal subunit.

This protein binds specifically to 23S rRNA; its binding is stimulated by other ribosomal proteins, e.g. L4, L17, and L20. It is important during the early stages of 50S assembly. It makes multiple contacts with different domains of the 23S rRNA in the assembled 50S subunit and ribosome. Functionally, the globular domain of the protein is located near the polypeptide exit tunnel on the outside of the subunit, while an extended beta-hairpin is found that lines the wall of the exit tunnel in the center of the 70S ribosome. The polypeptide is Large ribosomal subunit protein uL22 (Methylobacterium radiotolerans (strain ATCC 27329 / DSM 1819 / JCM 2831 / NBRC 15690 / NCIMB 10815 / 0-1)).